Consider the following 256-residue polypeptide: L-erythrulose-1-phosphate isomerase (256 aa).

The active-site Electrophile is histidine 96. The Proton acceptor role is filled by glutamate 169. Positions 175 and 212 each coordinate substrate.

This sequence belongs to the triosephosphate isomerase family. Homodimer.

It localises to the cytoplasm. It carries out the reaction L-erythrulose 1-phosphate = D-erythrulose 4-phosphate. It participates in carbohydrate metabolism; erythritol degradation. Its function is as follows. Catalyzes the isomerization of D-erythrulose-4P to L-erythrulose-1P. Involved in the degradation pathway of erythritol, that allows B.abortus to grow on this compound as the sole carbon source. The protein is L-erythrulose-1-phosphate isomerase of Brucella abortus (strain 2308).